Consider the following 156-residue polypeptide: ATP synthase subunit b (156 aa).

The helical transmembrane segment at 11-31 threads the bilayer; that stretch reads AIAFILFVWFCMKYVWPPLMA.

It belongs to the ATPase B chain family. As to quaternary structure, F-type ATPases have 2 components, F(1) - the catalytic core - and F(0) - the membrane proton channel. F(1) has five subunits: alpha(3), beta(3), gamma(1), delta(1), epsilon(1). F(0) has three main subunits: a(1), b(2) and c(10-14). The alpha and beta chains form an alternating ring which encloses part of the gamma chain. F(1) is attached to F(0) by a central stalk formed by the gamma and epsilon chains, while a peripheral stalk is formed by the delta and b chains.

It is found in the cell inner membrane. In terms of biological role, f(1)F(0) ATP synthase produces ATP from ADP in the presence of a proton or sodium gradient. F-type ATPases consist of two structural domains, F(1) containing the extramembraneous catalytic core and F(0) containing the membrane proton channel, linked together by a central stalk and a peripheral stalk. During catalysis, ATP synthesis in the catalytic domain of F(1) is coupled via a rotary mechanism of the central stalk subunits to proton translocation. Functionally, component of the F(0) channel, it forms part of the peripheral stalk, linking F(1) to F(0). This is ATP synthase subunit b from Salmonella gallinarum (strain 287/91 / NCTC 13346).